The chain runs to 233 residues: Orotidine 5'-phosphate decarboxylase (233 aa).

Substrate-binding positions include Asp-9, Lys-31, 58 to 67 (DLKLHDIPNT), Thr-120, Arg-182, Gln-191, Gly-211, and Arg-212. Lys-60 (proton donor) is an active-site residue.

It belongs to the OMP decarboxylase family. Type 1 subfamily. In terms of assembly, homodimer.

It catalyses the reaction orotidine 5'-phosphate + H(+) = UMP + CO2. Its pathway is pyrimidine metabolism; UMP biosynthesis via de novo pathway; UMP from orotate: step 2/2. Catalyzes the decarboxylation of orotidine 5'-monophosphate (OMP) to uridine 5'-monophosphate (UMP). The chain is Orotidine 5'-phosphate decarboxylase from Listeria monocytogenes serotype 4b (strain CLIP80459).